Consider the following 537-residue polypeptide: Caspase recruitment domain-containing protein 8 (537 aa).

The segment covering 1–23 (MEKKECPEKSSSSEEELPRRDSG) has biased composition (basic and acidic residues). Disordered regions lie at residues 1–28 (MEKK…SRNI) and 113–133 (GDIP…SGDI). The interval 161–296 (FLGPEGNVDV…FYAVLESPSF (136 aa)) is ZU5. Residues 161-446 (FLGPEGNVDV…LQLVAASAPP (286 aa)) enclose the FIIND domain. Residues 297-446 (SLMGILLRIA…LQLVAASAPP (150 aa)) are UPA. The CARD domain maps to 446–536 (PPFSGAAFVK…YLVSYLRQQN (91 aa)).

Interacts with DPP9; leading to inhibit activation of the inflammasome. DPP9 acts via formation of a ternary complex, composed of a DPP9 homodimer, one full-length CARD8 protein, and one cleaved C-terminus of CARD8 (Caspase recruitment domain-containing protein 8, C-terminus). Interacts with DPP8; leading to inhibit activation of the inflammasome, probably via formation of a ternary complex with DPP8. Interacts with NLRP3. Interacts with IKBKG/NEMO. Interacts with DRAL. Binds to caspase-1 (CASP1), CARD16/pseudo-ICE and CARD18/ICEBERG. Interacts with NLRP2 (via NACHT domain). As to quaternary structure, interacts with the C-terminal part of CARD8 (Caspase recruitment domain-containing protein 8, C-terminus) in absence of pathogens and other damage-associated signals. In terms of assembly, interacts with the N-terminal part of CARD8 (Caspase recruitment domain-containing protein 8, N-terminus) in absence of pathogens and other damage-associated signals. Homomultimer; forms the CARD8 inflammasome polymeric complex, a filament composed of homopolymers of this form in response to pathogens and other damage-associated signals. The CARD8 inflammasome polymeric complex directly recruits pro-caspase-1 (proCASP1) independently of PYCARD/ASC. Interacts (via CARD domain) with CASP1 (via CARD domain); leading to CASP1 activation. In terms of processing, undergoes autocatalytic processing within the FIIND domain to generate the N-terminal and C-terminal parts, which are associated non-covalently in absence of pathogens and other damage-associated signals. Ubiquitinated by the N-end rule pathway in response to pathogens and other damage-associated signals, leading to its degradation by the proteasome and subsequent release of the cleaved C-terminal part of the protein (Caspase recruitment domain-containing protein 8, C-terminus), which polymerizes and forms the CARD8 inflammasome. Post-translationally, (Microbial infection) Proteolytic cleavage by HIV-1 protease in the disordered region and within the ZU5 region of the FIIND domain promotes ubiquitination of the N-terminal part by the N-end rule pathway and degradation by the proteasome, releasing the cleaved C-terminal part of the protein (Caspase recruitment domain-containing protein 8, C-terminus), which polymerizes and forms the CARD8 inflammasome. In terms of processing, undergoes less autocatalytic processing within the FIIND domain compared to isoform 5. High expression in lung, ovary, testis and placenta. Lower expression in heart, kidney and liver. Also expressed in spleen, lymph node and bone marrow.

The protein resides in the cytoplasm. Its subcellular location is the nucleus. It is found in the inflammasome. Its activity is regulated as follows. CARD8 inflammasome is activated by HIV-1 protease activity: HIV-1 protease cleaves CARD8, promoting ubiquitination and degradation of the N-terminal part, releasing the cleaved C-terminal part of the protein (Caspase recruitment domain-containing protein 8, C-terminus), which polymerizes and forms the CARD8 inflammasome. CARD8 inflammasome is inhibited by DPP8 and DPP9, which sequester the C-terminal fragment of CARD8 (Caspase recruitment domain-containing protein 8, C-terminus) in a ternary complex, thereby preventing CARD8 oligomerization and activation. CARD8 inflammasome is activated by Val-boroPro (Talabostat, PT-100), an inhibitor of dipeptidyl peptidases DPP8 and DPP9. Val-boroPro relieves inhibition of DPP8 and/or DPP9 by inducing the proteasome-mediated destruction of the N-terminal part of CARD8, releasing its C-terminal part from autoinhibition. Indirectly activated by the pseudodipeptide CQ31. CQ31 directly inactivates the peptidases PEPD and XPNPEP1, leading to an accumulation of dipeptides that weaky inhibit DDP8 and DPP9, relieving DPP8- and/or DPP9-mediated inhibition of CARD8. In terms of biological role, inflammasome sensor, which mediates inflammasome activation in response to various pathogen-associated signals, leading to subsequent pyroptosis of CD4(+) T-cells and macrophages. Inflammasomes are supramolecular complexes that assemble in the cytosol in response to pathogens and other damage-associated signals and play critical roles in innate immunity and inflammation. Acts as a recognition receptor (PRR): recognizes specific pathogens and other damage-associated signals, such as HIV-1 protease activity or Val-boroPro inhibitor, and mediates CARD8 inflammasome activation. In response to pathogen-associated signals, the N-terminal part of CARD8 is degraded by the proteasome, releasing the cleaved C-terminal part of the protein (Caspase recruitment domain-containing protein 8, C-terminus), which polymerizes to initiate the formation of the inflammasome complex: the CARD8 inflammasome directly recruits pro-caspase-1 (proCASP1) independently of PYCARD/ASC and promotes caspase-1 (CASP1) activation, which subsequently cleaves and activates inflammatory cytokines IL1B and IL18 and gasdermin-D (GSDMD), leading to pyroptosis. Ability to sense HIV-1 protease activity leads to the clearance of latent HIV-1 in patient CD4(+) T-cells after viral reactivation; in contrast, HIV-1 can evade CARD8-sensing when its protease remains inactive in infected cells prior to viral budding. Also acts as a negative regulator of the NLRP3 inflammasome. May also act as an inhibitor of NF-kappa-B activation. Functionally, constitutes the precursor of the CARD8 inflammasome, which mediates autoproteolytic processing within the FIIND domain to generate the N-terminal and C-terminal parts, which are associated non-covalently in absence of pathogens and other damage-associated signals. Regulatory part that prevents formation of the CARD8 inflammasome: in absence of pathogens and other damage-associated signals, interacts with the C-terminal part of CARD8 (Caspase recruitment domain-containing protein 8, C-terminus), preventing activation of the CARD8 inflammasome. In response to pathogen-associated signals, this part is ubiquitinated by the N-end rule pathway and degraded by the proteasome, releasing the cleaved C-terminal part of the protein, which polymerizes and forms the CARD8 inflammasome. Its function is as follows. Constitutes the active part of the CARD8 inflammasome. In absence of pathogens and other damage-associated signals, interacts with the N-terminal part of CARD8 (Caspase recruitment domain-containing protein 8, N-terminus), preventing activation of the CARD8 inflammasome. In response to pathogen-associated signals, the N-terminal part of CARD8 is degraded by the proteasome, releasing this form, which polymerizes to form the CARD8 inflammasome complex: the CARD8 inflammasome complex then directly recruits pro-caspase-1 (proCASP1) and promotes caspase-1 (CASP1) activation, leading to gasdermin-D (GSDMD) cleavage and subsequent pyroptosis. This chain is Caspase recruitment domain-containing protein 8, found in Homo sapiens (Human).